We begin with the raw amino-acid sequence, 343 residues long: Anthranilate phosphoribosyltransferase (343 aa).

Residues glycine 78, 81 to 82, threonine 86, 88 to 91, 106 to 114, and serine 118 contribute to the 5-phospho-alpha-D-ribose 1-diphosphate site; these read GD, NIST, and KHGNRSVSS. Glycine 78 contacts anthranilate. Residue serine 90 coordinates Mg(2+). Asparagine 109 provides a ligand contact to anthranilate. Position 164 (arginine 164) interacts with anthranilate. Mg(2+) contacts are provided by aspartate 223 and glutamate 224.

Belongs to the anthranilate phosphoribosyltransferase family. In terms of assembly, homodimer. It depends on Mg(2+) as a cofactor.

It carries out the reaction N-(5-phospho-beta-D-ribosyl)anthranilate + diphosphate = 5-phospho-alpha-D-ribose 1-diphosphate + anthranilate. Its pathway is amino-acid biosynthesis; L-tryptophan biosynthesis; L-tryptophan from chorismate: step 2/5. Functionally, catalyzes the transfer of the phosphoribosyl group of 5-phosphorylribose-1-pyrophosphate (PRPP) to anthranilate to yield N-(5'-phosphoribosyl)-anthranilate (PRA). This chain is Anthranilate phosphoribosyltransferase, found in Chlamydia felis (strain Fe/C-56) (Chlamydophila felis).